The sequence spans 447 residues: Probable ribosomal RNA small subunit methyltransferase B (447 aa).

S-adenosyl-L-methionine is bound by residues 259–265 (CAAPGGK), D283, D310, and D329. The Nucleophile role is filled by C382.

Belongs to the class I-like SAM-binding methyltransferase superfamily. RsmB/NOP family.

The protein localises to the cytoplasm. It carries out the reaction cytidine(967) in 16S rRNA + S-adenosyl-L-methionine = 5-methylcytidine(967) in 16S rRNA + S-adenosyl-L-homocysteine + H(+). Its function is as follows. Specifically methylates the cytosine at position 967 (m5C967) of 16S rRNA. The chain is Probable ribosomal RNA small subunit methyltransferase B from Bacillus subtilis (strain 168).